We begin with the raw amino-acid sequence, 293 residues long: 5'-3' exoribonuclease Rnm (293 aa).

Mn(2+) contacts are provided by histidine 17, histidine 19, aspartate 24, histidine 49, glutamate 76, histidine 87, histidine 202, aspartate 259, and histidine 261.

This sequence belongs to the PHP family. TrpH/YciV subfamily. Mn(2+) serves as cofactor.

It carries out the reaction a ribonucleoside 3',5'-bisphosphate + H2O = a ribonucleoside 5'-phosphate + phosphate. Its function is as follows. Exoribonuclease that catalyzes the last steps of 5S, 16S and 23S rRNA 5'-end maturation. Removes 3 nucleotides (nt) from the 5' end of 5S, 16S and 23S rRNA precursors to generate the mature 5' ends. 5S and 23S rRNA maturation occurs more efficiently and accurately on ribosomal particles as compared to free RNA. Efficiently catalyzes the hydrolysis of the 3'-phosphate from 3',5'-bis-phosphonucleotides as well as the successive hydrolysis of 5'-phosphomononucleotides from the 5'-end of short pieces of RNA and DNA, with no specificity toward the identity of the nucleotide base. Is more efficient at hydrolyzing RNA oligonucleotides than DNA oligonucleotides. This enzyme can also hydrolyze annealed DNA duplexes, albeit at a catalytic efficiency lower than that of the corresponding single-stranded oligonucleotides. The protein is 5'-3' exoribonuclease Rnm of Salmonella typhimurium (strain LT2 / SGSC1412 / ATCC 700720).